The sequence spans 316 residues: Aspartate carbamoyltransferase catalytic subunit (316 aa).

Carbamoyl phosphate is bound by residues Arg58 and Thr59. Lys86 is a binding site for L-aspartate. Residues Arg108, His136, and Gln139 each coordinate carbamoyl phosphate. Arg169 and Arg223 together coordinate L-aspartate. Residues Gly264 and Pro265 each contribute to the carbamoyl phosphate site.

It belongs to the aspartate/ornithine carbamoyltransferase superfamily. ATCase family. As to quaternary structure, heterododecamer (2C3:3R2) of six catalytic PyrB chains organized as two trimers (C3), and six regulatory PyrI chains organized as three dimers (R2).

It catalyses the reaction carbamoyl phosphate + L-aspartate = N-carbamoyl-L-aspartate + phosphate + H(+). It functions in the pathway pyrimidine metabolism; UMP biosynthesis via de novo pathway; (S)-dihydroorotate from bicarbonate: step 2/3. In terms of biological role, catalyzes the condensation of carbamoyl phosphate and aspartate to form carbamoyl aspartate and inorganic phosphate, the committed step in the de novo pyrimidine nucleotide biosynthesis pathway. The protein is Aspartate carbamoyltransferase catalytic subunit of Granulibacter bethesdensis (strain ATCC BAA-1260 / CGDNIH1).